A 354-amino-acid polypeptide reads, in one-letter code: Erythroferrone (354 aa).

The first 28 residues, 1 to 28, serve as a signal peptide directing secretion; that stretch reads MAPARRPAGARLLLVYAGLLAAAAAGLG. Composition is skewed to low complexity over residues 26-37 and 51-62; these read GLGSPEPGAPSR and PRGPGESRAGPA. The disordered stretch occupies residues 26–123; the sequence is GLGSPEPGAP…PGPPGPQGPP (98 aa). Over residues 69–80 the composition is skewed to basic and acidic residues; it reads TAERAHSVDPRD. Positions 94–107 are enriched in basic residues; that stretch reads NGKKRSRGKAKKLK. Hydroxyproline occurs at positions 111, 113, 114, 116, 117, and 119. The segment covering 111 to 123 has biased composition (pro residues); that stretch reads PGPPGPPGPQGPP. The C1q domain maps to 199-354; it reads APRVEAAFLC…SHFSAVLLGV (156 aa). Asparagine 243, asparagine 295, and asparagine 333 each carry an N-linked (GlcNAc...) asparagine glycan.

This sequence belongs to the adipolin/erythroferrone family. Homodimer; disulfide-linked. Forms trimer, hexamers and higher molecular weight oligomers. May form heteromeric complexes with C1QTNF2 and C1QTNF12 and, to a lesser extent, with C1QTNF5 and C1QTNF10. Interacts with BMP5 and BMP7; the interaction inhibits BMP-induced transcription of HAMP. Interacts with BMP6; the interaction inhibits BMP-induced transcription of HAMP. Interacts with BMP2. Interacts with heterodimers composed of BMP2 and BMP6 in vitro, the interaction inhibits the heterodimer binding to its receptor BMPR1A /ALK3 and thereby suppresses expression of HAMP. Post-translationally, N-glycosylated; required for secretion of the mature protein.

It is found in the secreted. Its function is as follows. Iron-regulatory hormone that acts as an erythroid regulator after hemorrhage: produced by erythroblasts following blood loss and mediates suppression of hepcidin (HAMP) expression in the liver, thereby promoting increased iron absorption and mobilization from stores. Promotes lipid uptake into adipocytes and hepatocytes via transcriptional up-regulation of genes involved in fatty acid uptake. Inhibits apoptosis and inflammatory response in cardiomyocytes via promotion of sphingosine-1-phosphate (S1P) and cAMP-dependent activation of AKT signaling. Inhibits autophagy induced by nutrient deficiency in hepatocytes via promoting the phosphorylation of IRS1, AKT, and MTOR, and thereby subsequent activation of the AKT-MTOR signaling pathway. Negatively regulates the differentiation of osteoblasts, potentially via sequestering BMP2, and thereby inhibits the activation of SMAD signaling. The reduction in BMP2 signaling in osteoblasts also results in an increase in expression of the osteoclastogenesis-promoting factors TNFSF11/RANKL and SOST, thereby indirectly promotes bone resorption. The sequence is that of Erythroferrone from Homo sapiens (Human).